Here is a 75-residue protein sequence, read N- to C-terminus: Movement protein TGBp3 (75 aa).

At 1–2 (MR) the chain is on the lumenal side. The helical transmembrane segment at 3–23 (VLDLILALITAAVVGYTIALV) threads the bilayer. The Cytoplasmic segment spans residues 24–75 (SNSGCYVHFDGRSATTTCPPGPWVESIANGLYTAGLARPHPEPECERRQSSW).

It belongs to the Tymovirales TGBp3 protein family.

It is found in the host endoplasmic reticulum membrane. Its function is as follows. Plays a role in viral cell-to-cell propagation, by facilitating genome transport to neighboring plant cells through plasmosdesmata. May induce the formation of granular vesicles derived from the Endoplasmic reticulum, which align on actin filaments. The polypeptide is Movement protein TGBp3 (Strawberry mild yellow edge-associated virus (SMYEaV)).